The primary structure comprises 61 residues: MAANCDVCGKGPGFGNNISHSHRRTSRRWNPNIQRVRTVVSGTPKRVNACTSCIKAGKVSR.

The protein belongs to the bacterial ribosomal protein bL28 family.

The protein is Large ribosomal subunit protein bL28A (rpmB1) of Streptomyces coelicolor (strain ATCC BAA-471 / A3(2) / M145).